The chain runs to 686 residues: MKLPLLLALVVCSAVSTNLKMVSKRNSVDGCIDWSVDLKTYMALAGEPVRVKCALFYSYIRTNYSMAQSTGLRLMWYRNKGDLEEPIIFSEVRMSKEEDAIWFHSAEEQDSGFYTCVLRNSTYCMKVSMSLTVAENESGLCYNSRIRYLEKSEVTKRKEISCPDMDDFKKSDQEPDVVWYKECKPKMWRSIIIQKGNALLIQEVQEEDGGNYTCELKYEGKLVRRTTELKVTALLTDKPPKPLFPMENQPSVIDVQLGKPLNIPCKAFFGFSGESGPMIYWMKGEKFIEELAGHIREGEIRLLKEHLGEKEVELTLIFDSVVEADLANYTCHVENRNGRKHASVLLRKKDLIYKIELAGGLGAIFLLLILLLVVYKCYNIELMLFYRQRFGGDETTDDNKEYDAYLSYTKVDQDTLDCDNTEEEQFALEILPDVLEKHYGYKLFIPERDLIPSGTYIEDLTRCVEQSRRLIIVLTPDYILRRGWSIFELESRLHNMLVSGEIKVILIECTELKGKVNCQEVESLKHNIKLLSLIKWKGPKSSKLNSKFWKHLVYEMPIKKKEMLSHCHVLDSAEQGLFGELQPIPSIAMTSTSATMVPSQADLPEFHHSDSMQMRHCCRGYQHEMPANTLSVPSLGNHHTYCNLPLTLLNGQLPLNNSLKETEEFSRNNPLLPLTSKELSFTSDIW.

Residues 1–16 (MKLPLLLALVVCSAVS) form the signal peptide. At 17–354 (TNLKMVSKRN…LLRKKDLIYK (338 aa)) the chain is on the extracellular side. Positions 32–132 (IDWSVDLKTY…YCMKVSMSLT (101 aa)) constitute an Ig-like C2-type 1 domain. An intrachain disulfide couples Cys-53 to Cys-116. N-linked (GlcNAc...) asparagine glycosylation is found at Asn-63, Asn-120, Asn-136, Asn-211, and Asn-328. Ig-like C2-type domains are found at residues 141 to 232 (CYNS…LKVT) and 239 to 347 (PPKP…VLLR). 2 cysteine pairs are disulfide-bonded: Cys-162/Cys-214 and Cys-265/Cys-331. The chain crosses the membrane as a helical span at residues 355–375 (IELAGGLGAIFLLLILLLVVY). Residues 376-686 (KCYNIELMLF…KELSFTSDIW (311 aa)) lie on the Cytoplasmic side of the membrane. One can recognise a TIR domain in the interval 400–556 (KEYDAYLSYT…KFWKHLVYEM (157 aa)). Residue Glu-488 is part of the active site.

It belongs to the interleukin-1 receptor family. In terms of tissue distribution, detected in fetal brain after day 12.5, in particular in parts of the diencephalon and in the basal plate of the spinal cord. In postnatal brain detected in cerebral cortex, olfactory bulb, in the CA1 region of the hippocampus and in Purkinje cells of the Xth cerebellar lobule.

It is found in the membrane. The catalysed reaction is NAD(+) + H2O = ADP-D-ribose + nicotinamide + H(+). The protein is X-linked interleukin-1 receptor accessory protein-like 2 (Il1rapl2) of Mus musculus (Mouse).